We begin with the raw amino-acid sequence, 240 residues long: Probable phosphatase Pcar_2586 (240 aa).

Zn(2+) contacts are provided by His12, His14, His20, His45, Glu78, His105, His136, Asp197, and His199.

This sequence belongs to the PHP family. Requires Zn(2+) as cofactor.

The sequence is that of Probable phosphatase Pcar_2586 from Syntrophotalea carbinolica (strain DSM 2380 / NBRC 103641 / GraBd1) (Pelobacter carbinolicus).